A 518-amino-acid chain; its full sequence is Probable thiamine biosynthetic bifunctional enzyme (518 aa).

The thiamine-phosphate synthase stretch occupies residues 1-229 (MKRQIDYSLY…ATPPCFAQAR (229 aa)). Residues 40-44 (QHREK) and asparagine 72 each bind 4-amino-2-methyl-5-(diphosphooxymethyl)pyrimidine. Positions 73 and 92 each coordinate Mg(2+). Residue serine 111 coordinates 4-amino-2-methyl-5-(diphosphooxymethyl)pyrimidine. 137–139 (TNT) serves as a coordination point for 2-[(2R,5Z)-2-carboxy-4-methylthiazol-5(2H)-ylidene]ethyl phosphate. Lysine 140 contacts 4-amino-2-methyl-5-(diphosphooxymethyl)pyrimidine. Residues glycine 173 and 199 to 200 (VS) each bind 2-[(2R,5Z)-2-carboxy-4-methylthiazol-5(2H)-ylidene]ethyl phosphate. A hydroxyethylthiazole kinase region spans residues 230-518 (SSLTTPKDLL…IERAKLEKAE (289 aa)). Methionine 281 lines the 5-(2-hydroxyethyl)-4-methylthiazole pocket. Positions 355 and 403 each coordinate ATP. Alanine 430 contributes to the 5-(2-hydroxyethyl)-4-methylthiazole binding site. The active-site Proton acceptor; for hydroxyethylthiazole kinase activity is the cysteine 433.

This sequence in the N-terminal section; belongs to the thiamine-phosphate synthase family. In the C-terminal section; belongs to the Thz kinase family. Requires Mg(2+) as cofactor.

The catalysed reaction is 2-[(2R,5Z)-2-carboxy-4-methylthiazol-5(2H)-ylidene]ethyl phosphate + 4-amino-2-methyl-5-(diphosphooxymethyl)pyrimidine + 2 H(+) = thiamine phosphate + CO2 + diphosphate. The enzyme catalyses 2-(2-carboxy-4-methylthiazol-5-yl)ethyl phosphate + 4-amino-2-methyl-5-(diphosphooxymethyl)pyrimidine + 2 H(+) = thiamine phosphate + CO2 + diphosphate. It carries out the reaction 4-methyl-5-(2-phosphooxyethyl)-thiazole + 4-amino-2-methyl-5-(diphosphooxymethyl)pyrimidine + H(+) = thiamine phosphate + diphosphate. It catalyses the reaction 5-(2-hydroxyethyl)-4-methylthiazole + ATP = 4-methyl-5-(2-phosphooxyethyl)-thiazole + ADP + H(+). Its pathway is cofactor biosynthesis; thiamine diphosphate biosynthesis; 4-methyl-5-(2-phosphoethyl)-thiazole from 5-(2-hydroxyethyl)-4-methylthiazole: step 1/1. It functions in the pathway cofactor biosynthesis; thiamine diphosphate biosynthesis; thiamine phosphate from 4-amino-2-methyl-5-diphosphomethylpyrimidine and 4-methyl-5-(2-phosphoethyl)-thiazole: step 1/1. Its function is as follows. Condenses 4-methyl-5-(beta-hydroxyethyl)thiazole monophosphate (THZ-P) and 2-methyl-4-amino-5-hydroxymethyl pyrimidine pyrophosphate (HMP-PP) to form thiamine monophosphate (TMP). This chain is Probable thiamine biosynthetic bifunctional enzyme (thi4), found in Schizosaccharomyces pombe (strain 972 / ATCC 24843) (Fission yeast).